A 287-amino-acid polypeptide reads, in one-letter code: Toxin zeta (287 aa).

40-47 (GQPGSGKT) is a binding site for ATP. The tract at residues 250–287 (MVQNQHQETPEFKAIQQKMESLQPPTPPIPKTPKLPGI) is disordered. Positions 273–287 (PPTPPIPKTPKLPGI) are enriched in pro residues.

The protein belongs to the zeta toxin family. As to quaternary structure, in the presence of the epsilon antitoxin, forms an inactive PezA(2)PezT(2) heterotetramer.

It catalyses the reaction UDP-N-acetyl-alpha-D-glucosamine + ATP = UDP-N-acetyl-alpha-D-glucosamine 3'-phosphate + ADP + H(+). Toxic component of a type II toxin-antitoxin (TA) system. Phosphorylates UDP-N-acetyl-D-glucosamine (UNAG) on the 3'-hydroxyl group of the N-acetyl-D-glucosamine moiety, yielding UNAG-3P. UNAG-3P inhibits MurA, the first committed step in cell wall synthesis, which is then blocked. Phosphorylation is inhibited by cognate epsilon antitoxin. Part of a postsegregational killing (PSK) system involved in the killing of plasmid-free cells. The zeta toxin induces programmed cell death. This Streptococcus agalactiae protein is Toxin zeta.